The primary structure comprises 906 residues: Translation initiation factor IF-2 (906 aa).

Disordered stretches follow at residues 94-125 (APEK…PETA), 165-232 (ESEA…TGKK), and 270-321 (RQEQ…SSEV). Basic and acidic residues-rich tracts occupy residues 165–176 (ESEAEKGTEIEK), 222–232 (GPAEARETGKK), and 270–284 (RQEQ…KREA). Positions 299–313 (QQRRSLKRGGKRKKY) are enriched in basic residues. The tr-type G domain maps to 405-574 (ERPPVITIMG…LLQAEMMELK (170 aa)). Positions 414-421 (GHVDHGKT) are G1. 414–421 (GHVDHGKT) lines the GTP pocket. A G2 region spans residues 439 to 443 (GITQH). A G3 region spans residues 460-463 (DTPG). GTP is bound by residues 460–464 (DTPGH) and 514–517 (NKMD). The segment at 514 to 517 (NKMD) is G4. Positions 550 to 552 (SAH) are G5.

Belongs to the TRAFAC class translation factor GTPase superfamily. Classic translation factor GTPase family. IF-2 subfamily.

Its subcellular location is the cytoplasm. One of the essential components for the initiation of protein synthesis. Protects formylmethionyl-tRNA from spontaneous hydrolysis and promotes its binding to the 30S ribosomal subunits. Also involved in the hydrolysis of GTP during the formation of the 70S ribosomal complex. In Sulfurovum sp. (strain NBC37-1), this protein is Translation initiation factor IF-2.